We begin with the raw amino-acid sequence, 314 residues long: Pseudouridine-5'-phosphate glycosidase (314 aa).

The active-site Proton donor is the glutamate 30. Residues lysine 91 and valine 111 each contribute to the substrate site. Aspartate 143 is a Mn(2+) binding site. Residue 145–147 coordinates substrate; sequence SAD. The active-site Nucleophile is the lysine 164.

The protein belongs to the pseudouridine-5'-phosphate glycosidase family. Homotrimer. Mn(2+) serves as cofactor.

The catalysed reaction is D-ribose 5-phosphate + uracil = psi-UMP + H2O. Functionally, catalyzes the reversible cleavage of pseudouridine 5'-phosphate (PsiMP) to ribose 5-phosphate and uracil. Functions biologically in the cleavage direction, as part of a pseudouridine degradation pathway. This is Pseudouridine-5'-phosphate glycosidase from Cupriavidus pinatubonensis (strain JMP 134 / LMG 1197) (Cupriavidus necator (strain JMP 134)).